A 152-amino-acid chain; its full sequence is Putative pre-16S rRNA nuclease (152 aa).

It belongs to the YqgF nuclease family.

The protein localises to the cytoplasm. In terms of biological role, could be a nuclease involved in processing of the 5'-end of pre-16S rRNA. The chain is Putative pre-16S rRNA nuclease from Synechocystis sp. (strain ATCC 27184 / PCC 6803 / Kazusa).